The primary structure comprises 396 residues: Elongation factor Tu 2 (396 aa).

The tr-type G domain occupies 10–206; that stretch reads KPHVNVGTIG…ALDTYIPTPE (197 aa). A G1 region spans residues 19-26; it reads GHVDHGKT. 19–26 contacts GTP; the sequence is GHVDHGKT. Thr26 is a Mg(2+) binding site. Residues 60 to 64 form a G2 region; sequence GITIN. Residues 81-84 are G3; sequence DCPG. Residues 81 to 85 and 136 to 139 each bind GTP; these read DCPGH and NKAD. The G4 stretch occupies residues 136-139; sequence NKAD. The segment at 174–176 is G5; sequence SAK.

The protein belongs to the TRAFAC class translation factor GTPase superfamily. Classic translation factor GTPase family. EF-Tu/EF-1A subfamily. As to quaternary structure, monomer.

Its subcellular location is the cytoplasm. It carries out the reaction GTP + H2O = GDP + phosphate + H(+). Its function is as follows. GTP hydrolase that promotes the GTP-dependent binding of aminoacyl-tRNA to the A-site of ribosomes during protein biosynthesis. This Methylobacillus flagellatus (strain ATCC 51484 / DSM 6875 / VKM B-1610 / KT) protein is Elongation factor Tu 2.